The primary structure comprises 428 residues: CinA-like protein (428 aa).

Belongs to the CinA family.

The chain is CinA-like protein from Chlorobium phaeovibrioides (strain DSM 265 / 1930) (Prosthecochloris vibrioformis (strain DSM 265)).